An 89-amino-acid polypeptide reads, in one-letter code: UPF0297 protein SUB1776 (89 aa).

This sequence belongs to the UPF0297 family.

The chain is UPF0297 protein SUB1776 from Streptococcus uberis (strain ATCC BAA-854 / 0140J).